The primary structure comprises 302 residues: Phosphatidylglycerol--prolipoprotein diacylglyceryl transferase (302 aa).

7 helical membrane-spanning segments follow: residues 19-39 (FGPL…LLGW), 67-87 (LVLW…FVFY), 108-128 (IWEG…AIIL), 143-163 (LIAP…FING), 203-223 (QLYE…FAIY), 232-252 (GALV…LENV), and 264-284 (LGLT…GWLL). Arg-156 contacts a 1,2-diacyl-sn-glycero-3-phospho-(1'-sn-glycerol).

The protein belongs to the Lgt family.

The protein localises to the cell inner membrane. The catalysed reaction is L-cysteinyl-[prolipoprotein] + a 1,2-diacyl-sn-glycero-3-phospho-(1'-sn-glycerol) = an S-1,2-diacyl-sn-glyceryl-L-cysteinyl-[prolipoprotein] + sn-glycerol 1-phosphate + H(+). It participates in protein modification; lipoprotein biosynthesis (diacylglyceryl transfer). In terms of biological role, catalyzes the transfer of the diacylglyceryl group from phosphatidylglycerol to the sulfhydryl group of the N-terminal cysteine of a prolipoprotein, the first step in the formation of mature lipoproteins. In Caulobacter vibrioides (strain ATCC 19089 / CIP 103742 / CB 15) (Caulobacter crescentus), this protein is Phosphatidylglycerol--prolipoprotein diacylglyceryl transferase.